Consider the following 381-residue polypeptide: Acetylornithine deacetylase (381 aa).

Residue histidine 79 participates in Zn(2+) binding. Aspartate 81 is a catalytic residue. Aspartate 111 is a Zn(2+) binding site. Residue glutamate 143 is part of the active site. Positions 144, 168, and 354 each coordinate Zn(2+).

Belongs to the peptidase M20A family. ArgE subfamily. Homodimer. The cofactor is Zn(2+). Co(2+) is required as a cofactor. It depends on glutathione as a cofactor.

It is found in the cytoplasm. The catalysed reaction is N(2)-acetyl-L-ornithine + H2O = L-ornithine + acetate. Its pathway is amino-acid biosynthesis; L-arginine biosynthesis; L-ornithine from N(2)-acetyl-L-ornithine (linear): step 1/1. Its function is as follows. Catalyzes the hydrolysis of the amide bond of N(2)-acetylated L-amino acids. Cleaves the acetyl group from N-acetyl-L-ornithine to form L-ornithine, an intermediate in L-arginine biosynthesis pathway, and a branchpoint in the synthesis of polyamines. The chain is Acetylornithine deacetylase from Buchnera aphidicola subsp. Acyrthosiphon pisum (strain APS) (Acyrthosiphon pisum symbiotic bacterium).